Reading from the N-terminus, the 118-residue chain is Ribulose bisphosphate carboxylase small subunit (118 aa).

It belongs to the RuBisCO small chain family. In terms of assembly, heterohexadecamer of 8 large and 8 small subunits.

RuBisCO catalyzes two reactions: the carboxylation of D-ribulose 1,5-bisphosphate, the primary event in carbon dioxide fixation, as well as the oxidative fragmentation of the pentose substrate. Both reactions occur simultaneously and in competition at the same active site. Although the small subunit is not catalytic it is essential for maximal activity. The chain is Ribulose bisphosphate carboxylase small subunit from Rhodobacter capsulatus (Rhodopseudomonas capsulata).